The following is a 598-amino-acid chain: MSFGSKVSRALRFLEIPVKDRASVSFLKNPDLQPIKSANQTWGFWSNFAYWGVMSFSVGTWMSASSALGVGLSYPETIGTFIVGDVLTIIFTLANSCPGYDWKVGFTLAQRFVFGIYGSAFGIIIRILMSIVNYGSNAWVGGLCINMILDSWSHHYLHLPNTLSSKVAMTTKELIGFIIFHVLTAFCYLMKPYHMNYILIWSCVATFFSMLGMVIYLAKQAHGVGELFTSTKSTATGSTKAWAWVYMISYWFGSVSPGSTNQSDYSRFGSSNWAIWAGTICALLIPTTLIPVFGVIGASTCDKLYGEQYWMPMDIFNHWLTTNYSAGARAGAFFCGLSFVLSQMSYTISNCGFASGMDLAGLLPKYVDIKRGALFAACVSWACLPWNFYNSSSTFLTVMSSFGVVMTPIISVMICDNFLIRKRQYSITNAFILKGEYYFTKGVNWRAIVAWVCGMTPGLPGIAWEVNNDYFHNTGIVNFFYGDSFFSFLISFFVYWGLCLLFPFKITVKHDDKDYYGAFTDEEARKKGMVPYSEISEEEIRAYTLGEGYTTGHEYRPEGSDDEIPELVKTSSENTNEFEIVHHKNNEKQSSTASEKAA.

Residues Met-1 to Thr-41 lie on the Cytoplasmic side of the membrane. Residues Trp-42–Met-62 form a helical membrane-spanning segment. Over Ser-63–Ser-73 the chain is Extracellular. A helical membrane pass occupies residues Tyr-74 to Ala-94. At Asn-95–Arg-111 the chain is on the cytoplasmic side. The helical transmembrane segment at Phe-112–Val-132 threads the bilayer. The Extracellular segment spans residues Asn-133 to Glu-173. The helical transmembrane segment at Leu-174–His-194 threads the bilayer. Residues Met-195 to Tyr-197 lie on the Cytoplasmic side of the membrane. A helical transmembrane segment spans residues Ile-198–Ala-218. The Extracellular portion of the chain corresponds to Lys-219–Lys-240. Residues Ala-241–Asn-261 form a helical membrane-spanning segment. Residues Gln-262–Ala-274 are Cytoplasmic-facing. Residues Ile-275–Val-295 traverse the membrane as a helical segment. The Extracellular portion of the chain corresponds to Ile-296–Ala-332. A helical membrane pass occupies residues Phe-333 to Phe-353. The Cytoplasmic segment spans residues Ala-354 to Arg-371. A helical transmembrane segment spans residues Gly-372–Ser-392. Residues Ser-393–Thr-394 are Extracellular-facing. Residues Phe-395–Cys-415 form a helical membrane-spanning segment. Over Asp-416–Arg-446 the chain is Cytoplasmic. A helical transmembrane segment spans residues Ala-447–Asn-467. Topologically, residues Asn-468 to Asp-483 are extracellular. Residues Ser-484–Phe-504 traverse the membrane as a helical segment. The Cytoplasmic portion of the chain corresponds to Lys-505–Ala-598. A Phosphoserine modification is found at Ser-560. Residues Asn-574–Ala-598 are disordered. The span at Lys-588–Ala-598 shows a compositional bias: polar residues.

Belongs to the purine-cytosine permease (2.A.39) family.

The protein localises to the membrane. In terms of biological role, responsible for intake of thiamine. The chain is Thiamine transporter (THI7) from Saccharomyces cerevisiae (strain ATCC 204508 / S288c) (Baker's yeast).